Reading from the N-terminus, the 198-residue chain is Probable molybdenum cofactor guanylyltransferase (198 aa).

Residues 9 to 11 (LAG), Lys22, Asp66, and Asp95 each bind GTP. Asp95 is a Mg(2+) binding site.

This sequence belongs to the MobA family. Mg(2+) serves as cofactor.

It is found in the cytoplasm. It carries out the reaction Mo-molybdopterin + GTP + H(+) = Mo-molybdopterin guanine dinucleotide + diphosphate. In terms of biological role, transfers a GMP moiety from GTP to Mo-molybdopterin (Mo-MPT) cofactor (Moco or molybdenum cofactor) to form Mo-molybdopterin guanine dinucleotide (Mo-MGD) cofactor. This chain is Probable molybdenum cofactor guanylyltransferase, found in Clostridium perfringens (strain 13 / Type A).